The chain runs to 359 residues: Probable dual-specificity RNA methyltransferase RlmN (359 aa).

Glutamate 93 functions as the Proton acceptor in the catalytic mechanism. Residues 107–337 enclose the Radical SAM core domain; it reads KSERVTLCVS…VTMRYEKGHD (231 aa). Cysteine 114 and cysteine 342 form a disulfide bridge. Residues cysteine 121, cysteine 125, and cysteine 128 each contribute to the [4Fe-4S] cluster site. S-adenosyl-L-methionine-binding positions include 168–169, serine 200, 223–225, and asparagine 299; these read GE and SLH. Cysteine 342 serves as the catalytic S-methylcysteine intermediate.

Belongs to the radical SAM superfamily. RlmN family. [4Fe-4S] cluster is required as a cofactor.

It localises to the cytoplasm. It carries out the reaction adenosine(2503) in 23S rRNA + 2 reduced [2Fe-2S]-[ferredoxin] + 2 S-adenosyl-L-methionine = 2-methyladenosine(2503) in 23S rRNA + 5'-deoxyadenosine + L-methionine + 2 oxidized [2Fe-2S]-[ferredoxin] + S-adenosyl-L-homocysteine. The enzyme catalyses adenosine(37) in tRNA + 2 reduced [2Fe-2S]-[ferredoxin] + 2 S-adenosyl-L-methionine = 2-methyladenosine(37) in tRNA + 5'-deoxyadenosine + L-methionine + 2 oxidized [2Fe-2S]-[ferredoxin] + S-adenosyl-L-homocysteine. Specifically methylates position 2 of adenine 2503 in 23S rRNA and position 2 of adenine 37 in tRNAs. The polypeptide is Probable dual-specificity RNA methyltransferase RlmN (Akkermansia muciniphila (strain ATCC BAA-835 / DSM 22959 / JCM 33894 / BCRC 81048 / CCUG 64013 / CIP 107961 / Muc)).